We begin with the raw amino-acid sequence, 389 residues long: Nicotinamide-nucleotide adenylyltransferase (389 aa).

The short motif at 380–383 is the Nuclear localization signal element; it reads KKQK.

It belongs to the eukaryotic NMN adenylyltransferase family. Abundantly expressed in neuronal and muscle cells. Present at relatively low levels at the neuromuscular junction. Expressed in the eye; present in photoreceptor cells and various neurons in the lamina cortex and medulla cortex and at low levels in the lamina.

Its subcellular location is the nucleus. It localises to the cytoplasm. The protein localises to the presynaptic active zone. It catalyses the reaction beta-nicotinamide D-ribonucleotide + ATP + H(+) = diphosphate + NAD(+). It carries out the reaction nicotinate beta-D-ribonucleotide + ATP + H(+) = deamido-NAD(+) + diphosphate. The protein operates within cofactor biosynthesis; NAD(+) biosynthesis; NAD(+) from nicotinamide D-ribonucleotide: step 1/1. It functions in the pathway cofactor biosynthesis; NAD(+) biosynthesis; deamido-NAD(+) from nicotinate D-ribonucleotide: step 1/1. In terms of biological role, catalyzes the formation of NAD(+) from nicotinamide mononucleotide (NMN) and ATP. Essential for viability. Stress-response chaperone protein that prevents toxic aggregation of proteins and promotes proteasome-mediated degradation of misfolded proteins; this is independent of its NAD(+) synthesis activity. Neuroprotective in response to toxic protein aggregation, for example by overexpressed Atx-1/ataxin-1. Required for maintenance and integrity of mature neurons, protecting them from neuronal activity-induced neurodegeneration. Required for the maintenance of axonal and dendritic integrity in both central and peripheral neurons. Chaperone function and neuroprotective roles are largely independent of NAD(+) synthesis activity. Catalyzes the formation of NAD(+) from nicotinamide mononucleotide (NMN) and ATP. Has, or stimulates, chaperone holdase activity but not refoldase activity. Does not have neuroprotective properties and may stimulate apoptosis and neurodegeneration in response to toxic protein aggregates. Its function is as follows. Catalyzes the formation of NAD(+) from nicotinamide mononucleotide (NMN) and ATP. Has, or stimulates, chaperone holdase and refoldase activity. Neuroprotective and reduces the toxic load of protein aggregates, preventing apoptosis and neurodegeneration. Promotes clearance of nuclear misfolded protein aggregates. In Drosophila melanogaster (Fruit fly), this protein is Nicotinamide-nucleotide adenylyltransferase.